Here is a 222-residue protein sequence, read N- to C-terminus: (4-{4-[2-(gamma-L-glutamylamino)ethyl]phenoxymethyl}furan-2-yl)methanamine synthase (222 aa).

This sequence belongs to the MfnF family.

The enzyme catalyses gamma-L-glutamyltyramine + [5-(aminomethyl)furan-3-yl]methyl diphosphate = (4-{4-[2-(gamma-L-glutamylamino)ethyl]phenoxymethyl}furan-2-yl)methanamine + diphosphate. It functions in the pathway cofactor biosynthesis; methanofuran biosynthesis. In terms of biological role, catalyzes the condensation between 5-(aminomethyl)-3-furanmethanol diphosphate (F1-PP) and gamma-glutamyltyramine to produce APMF-Glu. In Methanococcus vannielii, this protein is (4-{4-[2-(gamma-L-glutamylamino)ethyl]phenoxymethyl}furan-2-yl)methanamine synthase.